Reading from the N-terminus, the 183-residue chain is MEQFRGTTILAARRDGQVVIGGDGQVTLGHTVMKGNARKVRRLHNGRVLAGFAGGTADAFTLFERFEGQLEKYRGNLTRAAVEMAKDWRSDRVLRRLEALLIVADREAMLVISGNGDVIDPEDDLVAIGSGGPYAQAAATALMRHSQLSARELVEQALGIAGDICIYTNRNLSIEELGPDSED.

Threonine 7 is an active-site residue. Residues glycine 162, cysteine 165, and threonine 168 each contribute to the Na(+) site.

It belongs to the peptidase T1B family. HslV subfamily. A double ring-shaped homohexamer of HslV is capped on each side by a ring-shaped HslU homohexamer. The assembly of the HslU/HslV complex is dependent on binding of ATP.

It localises to the cytoplasm. The enzyme catalyses ATP-dependent cleavage of peptide bonds with broad specificity.. Its activity is regulated as follows. Allosterically activated by HslU binding. Its function is as follows. Protease subunit of a proteasome-like degradation complex believed to be a general protein degrading machinery. This chain is ATP-dependent protease subunit HslV, found in Alkalilimnicola ehrlichii (strain ATCC BAA-1101 / DSM 17681 / MLHE-1).